The following is a 528-amino-acid chain: 2-isopropylmalate synthase (528 aa).

The Pyruvate carboxyltransferase domain occupies 12 to 279; the sequence is IRIFDTTLRD…DSSINTPRIV (268 aa). The Mn(2+) site is built by aspartate 21, histidine 214, histidine 216, and asparagine 250. Positions 401–528 are regulatory domain; sequence RLASMTISDV…STDVPTPATA (128 aa).

The protein belongs to the alpha-IPM synthase/homocitrate synthase family. LeuA type 1 subfamily. Homodimer. Requires Mn(2+) as cofactor.

It localises to the cytoplasm. It carries out the reaction 3-methyl-2-oxobutanoate + acetyl-CoA + H2O = (2S)-2-isopropylmalate + CoA + H(+). Its pathway is amino-acid biosynthesis; L-leucine biosynthesis; L-leucine from 3-methyl-2-oxobutanoate: step 1/4. In terms of biological role, catalyzes the condensation of the acetyl group of acetyl-CoA with 3-methyl-2-oxobutanoate (2-ketoisovalerate) to form 3-carboxy-3-hydroxy-4-methylpentanoate (2-isopropylmalate). The polypeptide is 2-isopropylmalate synthase (Stenotrophomonas maltophilia (strain K279a)).